Here is a 258-residue protein sequence, read N- to C-terminus: Phosphoprotein ECPP44 (258 aa).

Disordered regions lie at residues 1–25, 46–131, and 148–175; these read MASD…DRGL, EKVQ…PVEV, and KLPG…VDCA. 4 stretches are compositionally biased toward basic and acidic residues: residues 11-25, 46-80, 109-124, and 148-158; these read SVEK…DRGL, EKVQ…EKLH, GLKE…KEED, and KLPGGGKKVEE.

Belongs to the plant dehydrin family. Phosphorylated in embryogenic and somatic embryos. Not phosphorylated in non-embryogenic cells.

Phosphorylation of ECCP44 protein is thought to be involved in the acquisition of embryogenic competence. Unlike other dehydrins, it is not thought to function as an environmental stress tolerant. The protein is Phosphoprotein ECPP44 (ECPP44) of Daucus carota (Wild carrot).